The sequence spans 315 residues: MSFSSKVKGEICRYVDMCKEDALAEISAIMKVSGTIAFSGSGLSFKMTTENPASARLIFTLLKEHFNIHSKLMVKKSNSLKKNNIYMVVISEDMGVRELLYETGILQDIDGIMNLNYRINKSMIETEENRRAYIRGAFIGGGSISNPERTYHLEFVTHSEEYAIDLKDIINTFGLNSKVIQRKSSHIIYIKEGEQIVDLLNIIGAHASLLELENIRIMKEMRNNVNRLVNCETANLSKTVNAAVRQVESIRLIQNKIGLQRLPQNLREVAELRLNYPDESLKELGQMLDPQVGKSGINHRLRKIEKIAEELRTGN.

The H-T-H motif DNA-binding region spans 280 to 313 (SLKELGQMLDPQVGKSGINHRLRKIEKIAEELRT).

Belongs to the WhiA family.

In terms of biological role, involved in cell division and chromosome segregation. The protein is Probable cell division protein WhiA of Clostridium botulinum (strain Alaska E43 / Type E3).